Consider the following 414-residue polypeptide: BICD family-like cargo adapter 2 (414 aa).

The stretch at 34–341 (GQALLEKNEE…DALNQQLLNT (308 aa)) forms a coiled coil. Residues 372-384 (QEKEKENNKERTG) are compositionally biased toward basic and acidic residues. Positions 372–399 (QEKEKENNKERTGFQRGTRTTKSLRLRG) are disordered.

This chain is BICD family-like cargo adapter 2 (bicdl2), found in Danio rerio (Zebrafish).